A 206-amino-acid polypeptide reads, in one-letter code: MNNIYQKDLGLQQYNKVFENMLEFTSTRTPETNDEIWLVEHPAVFTQGKHGKPEHILNSHNIPIVATDRGGQVTYHGPGQAVIYFLLDIKRNKLGAKKLVTTVEQACINMLDKYYNLKAHIIDGAHGIYINNQKIASLGLRIKQGKSYHGIAINTNMDLTPFSYINPCGYSGLKMCQLANFYQEADIKKVQQQYTAEFVTLLNNSI.

Residues 30-206 (PETNDEIWLV…EFVTLLNNSI (177 aa)) form the BPL/LPL catalytic domain. Residues 69–76 (RGGQVTYH), 137–139 (SLG), and 150–152 (GIA) each bind substrate. Cysteine 168 functions as the Acyl-thioester intermediate in the catalytic mechanism.

It belongs to the LipB family.

The protein localises to the cytoplasm. The enzyme catalyses octanoyl-[ACP] + L-lysyl-[protein] = N(6)-octanoyl-L-lysyl-[protein] + holo-[ACP] + H(+). It participates in protein modification; protein lipoylation via endogenous pathway; protein N(6)-(lipoyl)lysine from octanoyl-[acyl-carrier-protein]: step 1/2. Functionally, catalyzes the transfer of endogenously produced octanoic acid from octanoyl-acyl-carrier-protein onto the lipoyl domains of lipoate-dependent enzymes. Lipoyl-ACP can also act as a substrate although octanoyl-ACP is likely to be the physiological substrate. The protein is Octanoyltransferase of Francisella tularensis subsp. novicida (strain U112).